The primary structure comprises 659 residues: ATP-binding cassette sub-family D member 3 (659 aa).

The segment at 1–61 is interaction with PEX19; that stretch reads MAAFSKYLTA…GKKERAVVDK (61 aa). N-linked (GlcNAc...) asparagine glycosylation occurs at Asn-12. Lys-61 bears the N6-acetyllysine mark. A helical transmembrane segment spans residues 84-104; the sequence is GYLLLIAVMLVSRTYCDVWMI. The ABC transmembrane type-1 domain maps to 85–372; it reads YLLLIAVMLV…MLLRMSQALG (288 aa). An N-linked (GlcNAc...) asparagine glycan is attached at Asn-106. A helical transmembrane segment spans residues 126 to 146; the sequence is LFNFIAAMPLISLVNNFLKYG. The N-linked (GlcNAc...) asparagine glycan is linked to Asn-206. The chain crosses the membrane as a helical span at residues 224–244; that stretch reads AIGAQGPASMMAYLLVSGLFL. The residue at position 260 (Lys-260) is an N6-acetyllysine. A helical transmembrane segment spans residues 313-333; sequence MGFIDSIIAKYVATVVGYLVV. Lys-399 is subject to N6-acetyllysine. Ser-424 carries the post-translational modification Phosphoserine. The ABC transporter domain maps to 434–659; the sequence is INTDNIIKFD…ITEDTVEFGS (226 aa). 473–480 provides a ligand contact to ATP; it reads GPNGCGKS. At Lys-533 the chain carries N6-acetyllysine. Phosphoserine is present on Ser-659.

Belongs to the ABC transporter superfamily. ABCD family. Peroxisomal fatty acyl CoA transporter (TC 3.A.1.203) subfamily. Homodimers. Can form heterodimers with ABCD1 and ABCD2. Dimerization is necessary to form an active transporter. Interacts with PEX19; mediates the targeting of ABCD3 to peroxisomes. Post-translationally, ubiquitinated by PEX2 during pexophagy in response to starvation, leading to its degradation.

Its subcellular location is the peroxisome membrane. The catalysed reaction is a very long-chain fatty acyl-CoA + H2O = a very long-chain fatty acid + CoA + H(+). The enzyme catalyses a very long-chain fatty acid(in) + ATP + H2O = a very long-chain fatty acid(out) + ADP + phosphate + H(+). It carries out the reaction a long-chain fatty acyl-CoA + H2O = a long-chain fatty acid + CoA + H(+). It catalyses the reaction a long-chain fatty acid(in) + ATP + H2O = a long-chain fatty acid(out) + ADP + phosphate + H(+). The catalysed reaction is pristanoyl-CoA + H2O = 2,6,10,14-tetramethylpentadecanoate + CoA + H(+). The enzyme catalyses 2,6,10,14-tetramethylpentadecanoate(in) + ATP + H2O = 2,6,10,14-tetramethylpentadecanoate(out) + ADP + phosphate + H(+). It carries out the reaction hexadecanedioyl-CoA + H2O = hexadecanedioate + CoA + H(+). It catalyses the reaction hexadecanedioate(in) + ATP + H2O = hexadecanedioate(out) + ADP + phosphate + H(+). The catalysed reaction is (5Z,8Z,11Z,14Z,17Z)-eicosapentaenoyl-CoA + H2O = (5Z,8Z,11Z,14Z,17Z)-eicosapentaenoate + CoA + H(+). The enzyme catalyses (5Z,8Z,11Z,14Z,17Z)-eicosapentaenoate(in) + ATP + H2O = (5Z,8Z,11Z,14Z,17Z)-eicosapentaenoate(out) + ADP + phosphate + H(+). It carries out the reaction (4Z,7Z,10Z,13Z,16Z,19Z)-docosahexaenoyl-CoA + H2O = (4Z,7Z,10Z,13Z,16Z,19Z)-docosahexaenoate + CoA + H(+). It catalyses the reaction (4Z,7Z,10Z,13Z,16Z,19Z)-docosahexaenoate(in) + ATP + H2O = (4Z,7Z,10Z,13Z,16Z,19Z)-docosahexaenoate(out) + ADP + phosphate + H(+). In terms of biological role, broad substrate specificity ATP-dependent transporter of the ATP-binding cassette (ABC) family that catalyzes the transport of long-chain fatty acids (LCFA)-CoA, dicarboxylic acids-CoA, long-branched-chain fatty acids-CoA and bile acids from the cytosol to the peroxisome lumen for beta-oxydation. Has fatty acyl-CoA thioesterase and ATPase activities. Probably hydrolyzes fatty acyl-CoAs into free fatty acids prior to their ATP-dependent transport into peroxisomes. Thus, play a role in regulation of LCFAs and energy metabolism namely, in the degradation and biosynthesis of fatty acids by beta-oxidation. In Mus musculus (Mouse), this protein is ATP-binding cassette sub-family D member 3 (Abcd3).